The chain runs to 127 residues: Holo-[acyl-carrier-protein] synthase (127 aa).

Positions 9 and 58 each coordinate Mg(2+).

This sequence belongs to the P-Pant transferase superfamily. AcpS family. Mg(2+) is required as a cofactor.

It localises to the cytoplasm. The enzyme catalyses apo-[ACP] + CoA = holo-[ACP] + adenosine 3',5'-bisphosphate + H(+). Functionally, transfers the 4'-phosphopantetheine moiety from coenzyme A to a Ser of acyl-carrier-protein. The sequence is that of Holo-[acyl-carrier-protein] synthase from Shewanella sp. (strain MR-4).